The primary structure comprises 167 residues: ATP synthase subunit b (167 aa).

A helical membrane pass occupies residues 8 to 28; the sequence is AEAEFWVGAGLLIFLGIVFFG.

This sequence belongs to the ATPase B chain family. F-type ATPases have 2 components, F(1) - the catalytic core - and F(0) - the membrane proton channel. F(1) has five subunits: alpha(3), beta(3), gamma(1), delta(1), epsilon(1). F(0) has three main subunits: a(1), b(2) and c(10-14). The alpha and beta chains form an alternating ring which encloses part of the gamma chain. F(1) is attached to F(0) by a central stalk formed by the gamma and epsilon chains, while a peripheral stalk is formed by the delta and b chains.

It is found in the cell inner membrane. F(1)F(0) ATP synthase produces ATP from ADP in the presence of a proton or sodium gradient. F-type ATPases consist of two structural domains, F(1) containing the extramembraneous catalytic core and F(0) containing the membrane proton channel, linked together by a central stalk and a peripheral stalk. During catalysis, ATP synthesis in the catalytic domain of F(1) is coupled via a rotary mechanism of the central stalk subunits to proton translocation. In terms of biological role, component of the F(0) channel, it forms part of the peripheral stalk, linking F(1) to F(0). The sequence is that of ATP synthase subunit b from Phenylobacterium zucineum (strain HLK1).